The primary structure comprises 173 residues: Putative metal-dependent hydrolase BCE_2729 (173 aa).

Zn(2+) is bound by residues histidine 65, histidine 156, and histidine 160.

It belongs to the metal hydrolase YfiT family. As to quaternary structure, homodimer. It depends on Zn(2+) as a cofactor.

The protein localises to the cytoplasm. Its function is as follows. Possible metal-dependent hydrolase. This Bacillus cereus (strain ATCC 10987 / NRS 248) protein is Putative metal-dependent hydrolase BCE_2729.